Consider the following 340-residue polypeptide: Flap endonuclease 1 (340 aa).

Residues 1–98 (MGVDLGGLVE…ETIKARAEVR (98 aa)) form an N-domain region. Residues Asp-27, Asp-80, Glu-151, Glu-153, Asp-172, Asp-174, and Asp-235 each contribute to the Mg(2+) site. The I-domain stretch occupies residues 115 to 256 (EAYKYAQAST…TALKLVKKHG (142 aa)). Residues 332–340 (KQKTLSSWF) form an interaction with PCNA region.

The protein belongs to the XPG/RAD2 endonuclease family. FEN1 subfamily. Interacts with PCNA. PCNA stimulates the nuclease activity without altering cleavage specificity. Mg(2+) is required as a cofactor.

Its function is as follows. Structure-specific nuclease with 5'-flap endonuclease and 5'-3' exonuclease activities involved in DNA replication and repair. During DNA replication, cleaves the 5'-overhanging flap structure that is generated by displacement synthesis when DNA polymerase encounters the 5'-end of a downstream Okazaki fragment. Binds the unpaired 3'-DNA end and kinks the DNA to facilitate 5' cleavage specificity. Cleaves one nucleotide into the double-stranded DNA from the junction in flap DNA, leaving a nick for ligation. Also involved in the base excision repair (BER) pathway. Acts as a genome stabilization factor that prevents flaps from equilibrating into structures that lead to duplications and deletions. Also possesses 5'-3' exonuclease activity on nicked or gapped double-stranded DNA. The chain is Flap endonuclease 1 from Methanocella arvoryzae (strain DSM 22066 / NBRC 105507 / MRE50).